Reading from the N-terminus, the 331-residue chain is Anthranilate phosphoribosyltransferase (331 aa).

5-phospho-alpha-D-ribose 1-diphosphate is bound by residues Gly-79, 82–83 (GD), Ser-87, 89–92 (NIST), 107–115 (KHCNTSISS), and Ser-119. Gly-79 provides a ligand contact to anthranilate. Ser-91 is a Mg(2+) binding site. Asn-110 provides a ligand contact to anthranilate. Arg-165 is a binding site for anthranilate. The Mg(2+) site is built by Asp-223 and Glu-224.

It belongs to the anthranilate phosphoribosyltransferase family. As to quaternary structure, homodimer. Mg(2+) is required as a cofactor.

The enzyme catalyses N-(5-phospho-beta-D-ribosyl)anthranilate + diphosphate = 5-phospho-alpha-D-ribose 1-diphosphate + anthranilate. It functions in the pathway amino-acid biosynthesis; L-tryptophan biosynthesis; L-tryptophan from chorismate: step 2/5. In terms of biological role, catalyzes the transfer of the phosphoribosyl group of 5-phosphorylribose-1-pyrophosphate (PRPP) to anthranilate to yield N-(5'-phosphoribosyl)-anthranilate (PRA). This Buchnera aphidicola subsp. Schlechtendalia chinensis protein is Anthranilate phosphoribosyltransferase.